The primary structure comprises 281 residues: DegV domain-containing protein DR_1986 (281 aa).

The DegV domain occupies 3 to 278 (IAIVTDSTSD…PGAVGVALEP (276 aa)). The hexadecanoate site is built by Thr61 and Ser93.

May bind long-chain fatty acids, such as palmitate, and may play a role in lipid transport or fatty acid metabolism. The protein is DegV domain-containing protein DR_1986 of Deinococcus radiodurans (strain ATCC 13939 / DSM 20539 / JCM 16871 / CCUG 27074 / LMG 4051 / NBRC 15346 / NCIMB 9279 / VKM B-1422 / R1).